Consider the following 320-residue polypeptide: Quinolinate synthase (320 aa).

Positions 34 and 51 each coordinate iminosuccinate. C96 provides a ligand contact to [4Fe-4S] cluster. Iminosuccinate contacts are provided by residues Y122–N124 and S139. Position 182 (C182) interacts with [4Fe-4S] cluster. Iminosuccinate contacts are provided by residues H208–E210 and T225. C276 is a binding site for [4Fe-4S] cluster.

This sequence belongs to the quinolinate synthase family. Type 2 subfamily. It depends on [4Fe-4S] cluster as a cofactor.

Its subcellular location is the cytoplasm. The catalysed reaction is iminosuccinate + dihydroxyacetone phosphate = quinolinate + phosphate + 2 H2O + H(+). It participates in cofactor biosynthesis; NAD(+) biosynthesis; quinolinate from iminoaspartate: step 1/1. Catalyzes the condensation of iminoaspartate with dihydroxyacetone phosphate to form quinolinate. The chain is Quinolinate synthase from Synechococcus sp. (strain ATCC 27144 / PCC 6301 / SAUG 1402/1) (Anacystis nidulans).